The following is a 393-amino-acid chain: NADH-quinone oxidoreductase subunit D (393 aa).

The protein belongs to the complex I 49 kDa subunit family. As to quaternary structure, NDH-1 is composed of 14 different subunits. Subunits NuoB, C, D, E, F, and G constitute the peripheral sector of the complex.

The protein localises to the cell inner membrane. It catalyses the reaction a quinone + NADH + 5 H(+)(in) = a quinol + NAD(+) + 4 H(+)(out). Its function is as follows. NDH-1 shuttles electrons from NADH, via FMN and iron-sulfur (Fe-S) centers, to quinones in the respiratory chain. The immediate electron acceptor for the enzyme in this species is believed to be ubiquinone. Couples the redox reaction to proton translocation (for every two electrons transferred, four hydrogen ions are translocated across the cytoplasmic membrane), and thus conserves the redox energy in a proton gradient. In Ehrlichia ruminantium (strain Welgevonden), this protein is NADH-quinone oxidoreductase subunit D.